A 212-amino-acid chain; its full sequence is 3-isopropylmalate dehydratase small subunit (212 aa).

It belongs to the LeuD family. LeuD type 1 subfamily. As to quaternary structure, heterodimer of LeuC and LeuD.

It catalyses the reaction (2R,3S)-3-isopropylmalate = (2S)-2-isopropylmalate. Its pathway is amino-acid biosynthesis; L-leucine biosynthesis; L-leucine from 3-methyl-2-oxobutanoate: step 2/4. Its function is as follows. Catalyzes the isomerization between 2-isopropylmalate and 3-isopropylmalate, via the formation of 2-isopropylmaleate. The polypeptide is 3-isopropylmalate dehydratase small subunit (Methylococcus capsulatus (strain ATCC 33009 / NCIMB 11132 / Bath)).